Consider the following 300-residue polypeptide: GTPase Era (300 aa).

Positions 6-173 (HSGFVAILGR…IESLVNTLPE (168 aa)) constitute an Era-type G domain. The segment at 14–21 (GRPNVGKS) is G1. 14 to 21 (GRPNVGKS) serves as a coordination point for GTP. Residues 40–44 (QTTRN) are G2. Residues 61-64 (DTPG) form a G3 region. Residues 61–65 (DTPGI) and 123–126 (NKID) contribute to the GTP site. The interval 123–126 (NKID) is G4. Residues 152 to 154 (ISA) are G5. The region spanning 204 to 281 (TREEVPHSVA…YLELWVKVQP (78 aa)) is the KH type-2 domain.

This sequence belongs to the TRAFAC class TrmE-Era-EngA-EngB-Septin-like GTPase superfamily. Era GTPase family. In terms of assembly, monomer.

It is found in the cytoplasm. It localises to the cell membrane. Its function is as follows. An essential GTPase that binds both GDP and GTP, with rapid nucleotide exchange. Plays a role in 16S rRNA processing and 30S ribosomal subunit biogenesis and possibly also in cell cycle regulation and energy metabolism. The sequence is that of GTPase Era from Ligilactobacillus salivarius (strain UCC118) (Lactobacillus salivarius).